The primary structure comprises 179 residues: Adenine phosphoribosyltransferase (179 aa).

The protein belongs to the purine/pyrimidine phosphoribosyltransferase family. As to quaternary structure, homodimer.

The protein localises to the cytoplasm. It carries out the reaction AMP + diphosphate = 5-phospho-alpha-D-ribose 1-diphosphate + adenine. It participates in purine metabolism; AMP biosynthesis via salvage pathway; AMP from adenine: step 1/1. Catalyzes a salvage reaction resulting in the formation of AMP, that is energically less costly than de novo synthesis. The chain is Adenine phosphoribosyltransferase from Bradyrhizobium sp. (strain BTAi1 / ATCC BAA-1182).